A 130-amino-acid polypeptide reads, in one-letter code: Fumarate reductase subunit C (130 aa).

3 helical membrane-spanning segments follow: residues 30 to 50 (EGTSIPAVWFSVLLIYGVFAL), 60 to 80 (FVSFLQNPLVLFLNILTLFAA), and 110 to 130 (IKALWVVTVVASAIILAVALL).

The protein belongs to the FrdC family. Part of an enzyme complex containing four subunits: a flavoprotein (FrdA), an iron-sulfur protein (FrdB), and two hydrophobic anchor proteins (FrdC and FrdD).

Its subcellular location is the cell inner membrane. Its function is as follows. Two distinct, membrane-bound, FAD-containing enzymes are responsible for the catalysis of fumarate and succinate interconversion; fumarate reductase is used in anaerobic growth, and succinate dehydrogenase is used in aerobic growth. Anchors the catalytic components of the fumarate reductase complex to the cell inner membrane, binds quinones. This chain is Fumarate reductase subunit C, found in Yersinia pseudotuberculosis serotype O:1b (strain IP 31758).